A 427-amino-acid chain; its full sequence is Flotillin-1 (427 aa).

A phosphoserine mark is found at S19, S163, and S385. Phosphothreonine is present on T387.

This sequence belongs to the band 7/mec-2 family. Flotillin subfamily. In terms of assembly, heterooligomeric complex of flotillin-1 and flotillin-2 and caveolin-1 and caveolin-2. Interacts with ECPAS.

Its subcellular location is the cell membrane. It is found in the endosome. The protein resides in the membrane. The protein localises to the caveola. It localises to the melanosome. Its subcellular location is the membrane raft. Its function is as follows. May act as a scaffolding protein within caveolar membranes, functionally participating in formation of caveolae or caveolae-like vesicles. In Pongo abelii (Sumatran orangutan), this protein is Flotillin-1 (FLOT1).